The chain runs to 306 residues: Methionyl-tRNA formyltransferase (306 aa).

A (6S)-5,6,7,8-tetrahydrofolate-binding site is contributed by 110 to 113; the sequence is SLLP.

This sequence belongs to the Fmt family.

It carries out the reaction L-methionyl-tRNA(fMet) + (6R)-10-formyltetrahydrofolate = N-formyl-L-methionyl-tRNA(fMet) + (6S)-5,6,7,8-tetrahydrofolate + H(+). Functionally, attaches a formyl group to the free amino group of methionyl-tRNA(fMet). The formyl group appears to play a dual role in the initiator identity of N-formylmethionyl-tRNA by promoting its recognition by IF2 and preventing the misappropriation of this tRNA by the elongation apparatus. The chain is Methionyl-tRNA formyltransferase from Brucella abortus (strain S19).